Reading from the N-terminus, the 358-residue chain is Porphobilinogen deaminase, chloroplastic (358 aa).

An N-terminal signal peptide occupies residues 1-24 (MPPPPRCAATTAHHSLLGSPTCLA). Cys290 is subject to S-(dipyrrolylmethanemethyl)cysteine.

Belongs to the HMBS family. Dipyrromethane serves as cofactor.

The protein localises to the plastid. The protein resides in the chloroplast. The enzyme catalyses 4 porphobilinogen + H2O = hydroxymethylbilane + 4 NH4(+). The protein operates within porphyrin-containing compound metabolism; protoporphyrin-IX biosynthesis; coproporphyrinogen-III from 5-aminolevulinate: step 2/4. Its pathway is porphyrin-containing compound metabolism; chlorophyll biosynthesis. Its function is as follows. Tetrapolymerization of the monopyrrole PBG into the hydroxymethylbilane pre-uroporphyrinogen in several discrete steps. This Oryza sativa subsp. japonica (Rice) protein is Porphobilinogen deaminase, chloroplastic (HEMC).